A 318-amino-acid polypeptide reads, in one-letter code: NADH-ubiquinone oxidoreductase chain 1 (318 aa).

The next 8 membrane-spanning stretches (helical) occupy residues 2-22 (FFIN…FLTL), 70-90 (MFIL…IPLP), 100-120 (LGVL…LWSG), 147-167 (AIIL…TLII), 171-191 (HMWL…STLA), 223-243 (FFLA…ILFF), 253-273 (ELYS…FLWI), and 294-314 (LPLT…TASI).

Belongs to the complex I subunit 1 family. Core subunit of respiratory chain NADH dehydrogenase (Complex I) which is composed of 45 different subunits.

It is found in the mitochondrion inner membrane. The enzyme catalyses a ubiquinone + NADH + 5 H(+)(in) = a ubiquinol + NAD(+) + 4 H(+)(out). Its function is as follows. Core subunit of the mitochondrial membrane respiratory chain NADH dehydrogenase (Complex I) which catalyzes electron transfer from NADH through the respiratory chain, using ubiquinone as an electron acceptor. Essential for the catalytic activity and assembly of complex I. This chain is NADH-ubiquinone oxidoreductase chain 1 (MT-ND1), found in Canis lupus familiaris (Dog).